Consider the following 130-residue polypeptide: Large ribosomal subunit protein bL17 (130 aa).

The protein belongs to the bacterial ribosomal protein bL17 family. Part of the 50S ribosomal subunit. Contacts protein L32.

This chain is Large ribosomal subunit protein bL17, found in Nitrosomonas europaea (strain ATCC 19718 / CIP 103999 / KCTC 2705 / NBRC 14298).